Consider the following 231-residue polypeptide: MSTSKNEYYDMTRGQKTCFVFSNSTYRSKKDEITLRKTFIEAGYKVRVIKDTNLIKTTNILSEFSEFAKKKKVCAVIVFILSHGVVNGEVYVGSDRCNLNYMVNAMDTEILRGVPKMLFVQINKEYRSVYENFKDVIVKFMSNTNLATLPDTTVVSIEDPCPAHAEYKPASPDVPLDFYYRESWYTNQSKDVTRVGSPMIQELCKLLRIDAEFCEIMALLDKKLEKFHIEP.

This sequence belongs to the peptidase C14A family.

The protein is Caspase-like protein of Trichoplusia ni ascovirus 2c (TnAV-2c).